We begin with the raw amino-acid sequence, 551 residues long: Putative BTB/POZ domain-containing protein L76 (551 aa).

One can recognise a BTB domain in the interval 19–90 (TDIILEIEDD…FYGQENDVID (72 aa)).

Belongs to the mimivirus BTB/WD family.

The polypeptide is Putative BTB/POZ domain-containing protein L76 (Acanthamoeba polyphaga (Amoeba)).